A 271-amino-acid polypeptide reads, in one-letter code: Endonuclease V (271 aa).

Residues 46–67 (TRTGDAPDVDQTTLSTSADDRT) are disordered. Positions 76 and 140 each coordinate Mg(2+).

This sequence belongs to the endonuclease V family. The cofactor is Mg(2+).

The protein resides in the cytoplasm. The catalysed reaction is Endonucleolytic cleavage at apurinic or apyrimidinic sites to products with a 5'-phosphate.. Functionally, DNA repair enzyme involved in the repair of deaminated bases. Selectively cleaves double-stranded DNA at the second phosphodiester bond 3' to a deoxyinosine leaving behind the intact lesion on the nicked DNA. In Haloarcula marismortui (strain ATCC 43049 / DSM 3752 / JCM 8966 / VKM B-1809) (Halobacterium marismortui), this protein is Endonuclease V.